Consider the following 299-residue polypeptide: Release factor glutamine methyltransferase (299 aa).

Residues 134-138, Asp-157, Trp-186, and Asn-203 each bind S-adenosyl-L-methionine; that span reads GTGSG. Substrate is bound at residue 203 to 206; that stretch reads NPPY.

Belongs to the protein N5-glutamine methyltransferase family. PrmC subfamily.

It carries out the reaction L-glutaminyl-[peptide chain release factor] + S-adenosyl-L-methionine = N(5)-methyl-L-glutaminyl-[peptide chain release factor] + S-adenosyl-L-homocysteine + H(+). Its function is as follows. Methylates the class 1 translation termination release factors RF1/PrfA and RF2/PrfB on the glutamine residue of the universally conserved GGQ motif. This is Release factor glutamine methyltransferase from Synechocystis sp. (strain ATCC 27184 / PCC 6803 / Kazusa).